Here is a 1409-residue protein sequence, read N- to C-terminus: DNA-directed RNA polymerase subunit beta' (1409 aa).

Zn(2+)-binding residues include Cys70, Cys72, Cys85, and Cys88. Mg(2+) is bound by residues Asp460, Asp462, and Asp464. Positions 814, 888, 895, and 898 each coordinate Zn(2+).

The protein belongs to the RNA polymerase beta' chain family. As to quaternary structure, the RNAP catalytic core consists of 2 alpha, 1 beta, 1 beta' and 1 omega subunit. When a sigma factor is associated with the core the holoenzyme is formed, which can initiate transcription. Mg(2+) serves as cofactor. Requires Zn(2+) as cofactor.

It carries out the reaction RNA(n) + a ribonucleoside 5'-triphosphate = RNA(n+1) + diphosphate. In terms of biological role, DNA-dependent RNA polymerase catalyzes the transcription of DNA into RNA using the four ribonucleoside triphosphates as substrates. This Shewanella violacea protein is DNA-directed RNA polymerase subunit beta'.